Consider the following 471-residue polypeptide: Methylenetetrahydrofolate--tRNA-(uracil-5-)-methyltransferase TrmFO (471 aa).

FAD is bound at residue Gly13–Gly18.

The protein belongs to the MnmG family. TrmFO subfamily. Requires FAD as cofactor.

The protein resides in the cytoplasm. It catalyses the reaction uridine(54) in tRNA + (6R)-5,10-methylene-5,6,7,8-tetrahydrofolate + NADH + H(+) = 5-methyluridine(54) in tRNA + (6S)-5,6,7,8-tetrahydrofolate + NAD(+). It carries out the reaction uridine(54) in tRNA + (6R)-5,10-methylene-5,6,7,8-tetrahydrofolate + NADPH + H(+) = 5-methyluridine(54) in tRNA + (6S)-5,6,7,8-tetrahydrofolate + NADP(+). In terms of biological role, catalyzes the folate-dependent formation of 5-methyl-uridine at position 54 (M-5-U54) in all tRNAs. The chain is Methylenetetrahydrofolate--tRNA-(uracil-5-)-methyltransferase TrmFO from Azorhizobium caulinodans (strain ATCC 43989 / DSM 5975 / JCM 20966 / LMG 6465 / NBRC 14845 / NCIMB 13405 / ORS 571).